The primary structure comprises 803 residues: Leucine--tRNA ligase (803 aa).

The 'HIGH' region motif lies at 40–51 (PYPSGAGLHVGH). Residues 575–579 (KMSKS) carry the 'KMSKS' region motif. Lysine 578 is a binding site for ATP.

It belongs to the class-I aminoacyl-tRNA synthetase family.

It is found in the cytoplasm. The enzyme catalyses tRNA(Leu) + L-leucine + ATP = L-leucyl-tRNA(Leu) + AMP + diphosphate. The polypeptide is Leucine--tRNA ligase (Listeria monocytogenes serovar 1/2a (strain ATCC BAA-679 / EGD-e)).